We begin with the raw amino-acid sequence, 440 residues long: Transposon Ty1-DR1 Gag polyprotein (440 aa).

Composition is skewed to polar residues over residues methionine 1 to proline 10, threonine 48 to serine 60, and glutamine 127 to phenylalanine 152. Disordered regions lie at residues methionine 1 to glutamine 93, proline 126 to proline 173, and glycine 352 to tyrosine 440. Positions threonine 153–threonine 165 are enriched in low complexity. Residues asparagine 299–histidine 401 form an RNA-binding region. A compositionally biased stretch (low complexity) spans asparagine 402–serine 418. Serine 416 is subject to Phosphoserine. Positions lysine 419 to asparagine 428 are enriched in polar residues. Residues asparagine 429 to tyrosine 440 show a composition bias toward basic and acidic residues.

As to quaternary structure, homotrimer.

The protein resides in the cytoplasm. Capsid protein (CA) is the structural component of the virus-like particle (VLP), forming the shell that encapsulates the retrotransposons dimeric RNA genome. The particles are assembled from trimer-clustered units and there are holes in the capsid shells that allow for the diffusion of macromolecules. CA also has nucleocapsid-like chaperone activity, promoting primer tRNA(i)-Met annealing to the multipartite primer-binding site (PBS), dimerization of Ty1 RNA and initiation of reverse transcription. The sequence is that of Transposon Ty1-DR1 Gag polyprotein (TY1A-DR1) from Saccharomyces cerevisiae (strain ATCC 204508 / S288c) (Baker's yeast).